The chain runs to 607 residues: TOM1-like protein 8 (607 aa).

Residues 9–138 (ATSDMLIGPD…ELLRAGIVFP (130 aa)) enclose the VHS domain. The interval 141–175 (PQITPSSGQNGPSTRYPQNSRNARQEAIDTSTESE) is disordered. Residues 175 to 263 (EFPTLSLTEI…LLAKHEAIAS (89 aa)) form the GAT domain. Residue S297 is modified to Phosphoserine. A compositionally biased stretch (polar residues) spans 355-379 (NNCESSTPTSNPHANHQKVQQNYSN). Disordered regions lie at residues 355–393 (NNCE…YYGQ), 407–460 (QPSS…SPTH), and 555–582 (DNGN…NKKP). S410 carries the post-translational modification Phosphoserine. The segment covering 448–460 (QSPSSSPQYSPTH) has biased composition (low complexity). Polar residues predominate over residues 555–569 (DNGNNNTNPYQVSSH).

It belongs to the TOM1 family. In terms of tissue distribution, specifically expressed in siliques and flowers.

It localises to the membrane. Functionally, might contribute to the loading of the ESCRT machinery. The protein is TOM1-like protein 8 of Arabidopsis thaliana (Mouse-ear cress).